Reading from the N-terminus, the 110-residue chain is Insulin (110 aa).

Residues 1–23 (MALWLQAFTLLVLLVLSSPGAQS) form the signal peptide. 3 disulfide bridges follow: Cys-30–Cys-96, Cys-42–Cys-109, and Cys-95–Cys-100. The propeptide at 56–87 (DVDPLLGFLSPKSAQENEADEYPYKDQGDLKV) is c peptide.

Belongs to the insulin family. In terms of assembly, heterodimer of a B chain and an A chain linked by two disulfide bonds.

It localises to the secreted. Insulin decreases blood glucose concentration. It increases cell permeability to monosaccharides, amino acids and fatty acids. It accelerates glycolysis, the pentose phosphate cycle, and glycogen synthesis in liver. The sequence is that of Insulin (ins) from Pantodon buchholzi (Freshwater butterflyfish).